The sequence spans 843 residues: Protein P (843 aa).

The segment at 1–177 (MPLSYPHFRK…FCGSPYSWEQ (177 aa)) is terminal protein domain (TP). A spacer region spans residues 178-346 (ELQHGSTSIN…YCLSHIINLL (169 aa)). 2 disordered regions span residues 202 to 221 (SGILSRPSAGSSIQGKFQQS) and 285 to 310 (TNPSLSTSKRHSSTGHAVELHSVPPG). The segment at 347–690 (EDWGPCYEHG…YMNLYPVARQ (344 aa)) is polymerase/reverse transcriptase domain (RT). Residues 357 to 600 (QHHIRTPRTP…YTLNFMGYVI (244 aa)) enclose the Reverse transcriptase domain. Asp-429, Asp-551, and Asp-552 together coordinate Mg(2+).

It belongs to the hepadnaviridae P protein family.

The enzyme catalyses DNA(n) + a 2'-deoxyribonucleoside 5'-triphosphate = DNA(n+1) + diphosphate. The catalysed reaction is Endonucleolytic cleavage to 5'-phosphomonoester.. With respect to regulation, activated by host HSP70 and HSP40 in vitro to be able to bind the epsilon loop of the pgRNA. Because deletion of the RNase H region renders the protein partly chaperone-independent, the chaperones may be needed indirectly to relieve occlusion of the RNA-binding site by this domain. Inhibited by several reverse-transcriptase inhibitors: Lamivudine, Adefovir and Entecavir. Its function is as follows. Multifunctional enzyme that converts the viral RNA genome into dsDNA in viral cytoplasmic capsids. This enzyme displays a DNA polymerase activity that can copy either DNA or RNA templates, and a ribonuclease H (RNase H) activity that cleaves the RNA strand of RNA-DNA heteroduplexes in a partially processive 3'- to 5'-endonucleasic mode. Neo-synthesized pregenomic RNA (pgRNA) are encapsidated together with the P protein, and reverse-transcribed inside the nucleocapsid. Initiation of reverse-transcription occurs first by binding the epsilon loop on the pgRNA genome, and is initiated by protein priming, thereby the 5'-end of (-)DNA is covalently linked to P protein. Partial (+)DNA is synthesized from the (-)DNA template and generates the relaxed circular DNA (RC-DNA) genome. After budding and infection, the RC-DNA migrates in the nucleus, and is converted into a plasmid-like covalently closed circular DNA (cccDNA). The activity of P protein does not seem to be necessary for cccDNA generation, and is presumably released from (+)DNA by host nuclear DNA repair machinery. The chain is Protein P from Hepatitis B virus genotype F1 (isolate Argentina/sa11/2000) (HBV-F).